A 187-amino-acid polypeptide reads, in one-letter code: Cytochrome b-245 chaperone 1 (187 aa).

The chain crosses the membrane as a helical span at residues 20-42 (GIRSWSLLVGILSIGLAAAYYSG). Ser168 is subject to Phosphoserine.

The protein belongs to the CYBC1 family. In terms of assembly, interacts with CYBB; CYBC1 may act as a chaperone stabilizing Cytochrome b-245 heterodimer.

The protein resides in the endoplasmic reticulum membrane. Functionally, functions as a chaperone necessary for a stable expression of the CYBA and CYBB subunits of the cytochrome b-245 heterodimer. Controls the phagocyte respiratory burst and is essential for innate immunity. This Bos taurus (Bovine) protein is Cytochrome b-245 chaperone 1.